The primary structure comprises 385 residues: Suppressor protein STP22 of temperature-sensitive alpha-factor receptor and arginine permease (385 aa).

Residues 12-161 form the UEV domain; that stretch reads AVVNWLFKVI…LHEPPQDQAP (150 aa). Positions 155-219 are disordered; the sequence is PPQDQAPSLP…DMDNTDISPT (65 aa). Polar residues predominate over residues 168–177; it reads NTQLQQEQNT. Over residues 178 to 201 the composition is skewed to pro residues; that stretch reads PPLPPKPKSPHLKPPLPPPPPPQP. Residues 272-300 adopt a coiled-coil conformation; the sequence is LRAVEQAIEQTMHSLNAQIDVLTANRAKV. Residues 322–385 enclose the SB domain; that stretch reads TDGLNQLYNL…HIQRITSPLS (64 aa).

Belongs to the ubiquitin-conjugating enzyme family. UEV subfamily. Component of the ESCRT-I complex (endosomal sorting complex required for transport I) which consists of STP22, VPS28, SRN2 and MVB12 in a 1:1:1:1 stoichiometry. Interacts with HSE1 and VPS27. Interacts with MVB12 and SRN2.

Its subcellular location is the cytoplasm. It is found in the endosome. It localises to the late endosome membrane. Its function is as follows. Component of the ESCRT-I complex, a regulator of vesicular trafficking process. Binds to ubiquitinated cargo proteins and is required for the sorting of endocytic ubiquitinated cargos into multivesicular bodies (MVBs). Mediates the association to the ESCRT-0 complex. Required for vacuolar targeting of temperature-sensitive plasma membrane proteins STE2 and CAN1. This chain is Suppressor protein STP22 of temperature-sensitive alpha-factor receptor and arginine permease (STP22), found in Saccharomyces cerevisiae (strain ATCC 204508 / S288c) (Baker's yeast).